A 570-amino-acid chain; its full sequence is Sulfite reductase [NADPH] hemoprotein beta-component (570 aa).

Residues cysteine 434, cysteine 440, cysteine 479, and cysteine 483 each contribute to the [4Fe-4S] cluster site. Cysteine 483 provides a ligand contact to siroheme.

The protein belongs to the nitrite and sulfite reductase 4Fe-4S domain family. As to quaternary structure, alpha(8)-beta(8). The alpha component is a flavoprotein, the beta component is a hemoprotein. Requires siroheme as cofactor. [4Fe-4S] cluster is required as a cofactor.

It carries out the reaction hydrogen sulfide + 3 NADP(+) + 3 H2O = sulfite + 3 NADPH + 4 H(+). It participates in sulfur metabolism; hydrogen sulfide biosynthesis; hydrogen sulfide from sulfite (NADPH route): step 1/1. Component of the sulfite reductase complex that catalyzes the 6-electron reduction of sulfite to sulfide. This is one of several activities required for the biosynthesis of L-cysteine from sulfate. In Escherichia coli O1:K1 / APEC, this protein is Sulfite reductase [NADPH] hemoprotein beta-component.